The chain runs to 294 residues: Elongation factor Ts (294 aa).

Residues 82-85 are involved in Mg(2+) ion dislocation from EF-Tu; the sequence is TDFV.

It belongs to the EF-Ts family.

The protein resides in the cytoplasm. Its function is as follows. Associates with the EF-Tu.GDP complex and induces the exchange of GDP to GTP. It remains bound to the aminoacyl-tRNA.EF-Tu.GTP complex up to the GTP hydrolysis stage on the ribosome. This is Elongation factor Ts from Psychrobacter arcticus (strain DSM 17307 / VKM B-2377 / 273-4).